The chain runs to 185 residues: MANVIIEKAKERMTQSHQSLAREFGGIRAGRANASLLDRVHVEYYGVETPLNQIASITIPEARVLLVTPFDKSSLKDIDRALNASDLGITPANDGSVIRLVIPALTEETRRDLAKEVKKVGENAKVAVRNIRRDAMDEAKKQEKAKEITEDELKTLEKDIQKVTDDAVKHIDDMTANKEKELLEV.

The protein belongs to the RRF family.

Its subcellular location is the cytoplasm. Its function is as follows. Responsible for the release of ribosomes from messenger RNA at the termination of protein biosynthesis. May increase the efficiency of translation by recycling ribosomes from one round of translation to another. This chain is Ribosome-recycling factor, found in Streptococcus pneumoniae serotype 2 (strain D39 / NCTC 7466).